A 57-amino-acid chain; its full sequence is UPF0391 membrane protein RPE_2138 (57 aa).

2 consecutive transmembrane segments (helical) span residues 4–24 (WVVT…GGIA) and 30–50 (IAKI…VIGL).

Belongs to the UPF0391 family.

The protein resides in the cell membrane. The sequence is that of UPF0391 membrane protein RPE_2138 from Rhodopseudomonas palustris (strain BisA53).